The chain runs to 309 residues: General transcription factor IIH subunit 3 (309 aa).

The segment at 269–286 adopts a C4-type zinc-finger fold; that stretch reads CSVCLSIFCNFSPICTTC.

It belongs to the TFB4 family. As to quaternary structure, part of a TFIID-containing RNA polymerase II pre-initiation complex that is composed of TBP and at least GTF2A1, GTF2A2, GTF2E1, GTF2E2, GTF2F1, GTF2H2, GTF2H3, GTF2H4, GTF2H5, GTF2B, TCEA1, ERCC2, ERCC3, TAF1, TAF2, TAF3, TAF4, TAF5, TAF6, TAF7, TAF8, TAF9, TAF10, TAF11, TAF12 and TAF13. Component of the 7-subunit TFIIH core complex composed of XPB/ERCC3, XPD/ERCC2, GTF2H1, GTF2H2, GTF2H3, GTF2H4 and GTF2H5, which is active in NER. The core complex associates with the 3-subunit CDK-activating kinase (CAK) module composed of CCNH/cyclin H, CDK7 and MNAT1 to form the 10-subunit holoenzyme (holo-TFIIH) active in transcription. Interacts with RARA; the interaction requires prior phosphorylation of RARA on 'Ser-369' which then enhances interaction of RARA with CDK7.

The protein resides in the nucleus. Functionally, component of the general transcription and DNA repair factor IIH (TFIIH) core complex, which is involved in general and transcription-coupled nucleotide excision repair (NER) of damaged DNA and, when complexed to CAK, in RNA transcription by RNA polymerase II. In NER, TFIIH acts by opening DNA around the lesion to allow the excision of the damaged oligonucleotide and its replacement by a new DNA fragment. In transcription, TFIIH has an essential role in transcription initiation. When the pre-initiation complex (PIC) has been established, TFIIH is required for promoter opening and promoter escape. Phosphorylation of the C-terminal tail (CTD) of the largest subunit of RNA polymerase II by the kinase module CAK controls the initiation of transcription. In Bos taurus (Bovine), this protein is General transcription factor IIH subunit 3 (GTF2H3).